A 266-amino-acid chain; its full sequence is Putative pyruvate, phosphate dikinase regulatory protein (266 aa).

149–156 lines the ADP pocket; sequence GVSRTSKT.

It belongs to the pyruvate, phosphate/water dikinase regulatory protein family. PDRP subfamily.

The enzyme catalyses N(tele)-phospho-L-histidyl/L-threonyl-[pyruvate, phosphate dikinase] + ADP = N(tele)-phospho-L-histidyl/O-phospho-L-threonyl-[pyruvate, phosphate dikinase] + AMP + H(+). The catalysed reaction is N(tele)-phospho-L-histidyl/O-phospho-L-threonyl-[pyruvate, phosphate dikinase] + phosphate + H(+) = N(tele)-phospho-L-histidyl/L-threonyl-[pyruvate, phosphate dikinase] + diphosphate. Its function is as follows. Bifunctional serine/threonine kinase and phosphorylase involved in the regulation of the pyruvate, phosphate dikinase (PPDK) by catalyzing its phosphorylation/dephosphorylation. In Geobacillus thermodenitrificans (strain NG80-2), this protein is Putative pyruvate, phosphate dikinase regulatory protein.